The following is a 735-amino-acid chain: 2-5A-dependent ribonuclease (735 aa).

Residues M1–T21 form a disordered region. ANK repeat units lie at residues E24 to A53, W58 to R87, N91 to E120, N124 to L153, G167 to A197, M201 to V234, R238 to A268, E272 to D301, and L303 to T328. The interval D26–A51 is binding to TMEV Leader protein. 2 2-5A binding (P-loop) regions span residues G229–P242 and G253–T275. Residues I364 to F584 enclose the Protein kinase domain. A C6-type zinc finger spans residues C401–C436. The KEN domain occupies W587–L722. The interval H714–S735 is disordered.

Belongs to the protein kinase superfamily. As to quaternary structure, (Microbial infection) Interacts (via N-terminus) with TMEV leader protein; this interaction prevents RNASEL activation by its substrate 2'-5' oligoadenylates. Monomer (inactive form) or homodimer. Interacts with ABCE1; this interaction inhibits the RNASEL. The cofactor is Mn(2+). It depends on Mg(2+) as a cofactor. As to expression, expressed in spleen, thymus, lung, testis, kidney, liver and heart.

It is found in the cytoplasm. The protein resides in the mitochondrion. Its activity is regulated as follows. After binding to 2-5A (5'-phosphorylated 2',5'-linked oligoadenylates) the homodimerization and subsequent activation occurs. Inhibited by RNASEL inhibitor ABCE1/RLI, a cytoplasmic member of the ATP-binding cassette (ABC) transporter family. Functionally, endoribonuclease that functions in the interferon (IFN) antiviral response. In INF treated and virus infected cells, RNASEL probably mediates its antiviral effects through a combination of direct cleavage of single-stranded viral RNAs, inhibition of protein synthesis through the degradation of rRNA, induction of apoptosis, and induction of other antiviral genes. RNASEL mediated apoptosis is the result of a JNK-dependent stress-response pathway leading to cytochrome c release from mitochondria and caspase-dependent apoptosis. Therefore, activation of RNASEL could lead to elimination of virus infected cells under some circumstances. In the crosstalk between autophagy and apoptosis proposed to induce autophagy as an early stress response to small double-stranded RNA and at later stages of prolonged stress to activate caspase-dependent proteolytic cleavage of BECN1 to terminate autophagy and promote apoptosis. Might play a central role in the regulation of mRNA turnover. Cleaves 3' of UpNp dimers, with preference for UU and UA sequences, to sets of discrete products ranging from between 4 and 22 nucleotides in length. The chain is 2-5A-dependent ribonuclease (Rnasel) from Mus musculus (Mouse).